The primary structure comprises 424 residues: Glutamate-1-semialdehyde 2,1-aminomutase (424 aa).

At lysine 266 the chain carries N6-(pyridoxal phosphate)lysine.

It belongs to the class-III pyridoxal-phosphate-dependent aminotransferase family. HemL subfamily. Homodimer. Pyridoxal 5'-phosphate serves as cofactor.

The protein resides in the cytoplasm. The catalysed reaction is (S)-4-amino-5-oxopentanoate = 5-aminolevulinate. The protein operates within porphyrin-containing compound metabolism; protoporphyrin-IX biosynthesis; 5-aminolevulinate from L-glutamyl-tRNA(Glu): step 2/2. In Azoarcus sp. (strain BH72), this protein is Glutamate-1-semialdehyde 2,1-aminomutase.